A 438-amino-acid chain; its full sequence is sn-glycerol-3-phosphate-binding periplasmic protein UgpB (438 aa).

A signal peptide spans 1–23 (MKPLHYTASALALGLALMGNAQA). Positions 65, 89, 144, 270, 307, 346, and 397 each coordinate sn-glycerol 3-phosphate.

It belongs to the bacterial solute-binding protein 1 family. The complex is composed of two ATP-binding proteins (UgpC), two transmembrane proteins (UgpA and UgpE) and a solute-binding protein (UgpB).

It is found in the periplasm. Functionally, part of the ABC transporter complex UgpBAEC involved in sn-glycerol-3-phosphate (G3P) import. Binds G3P. The chain is sn-glycerol-3-phosphate-binding periplasmic protein UgpB (ugpB) from Shigella flexneri serotype 5b (strain 8401).